The chain runs to 533 residues: Beta-1,2-xylosyltransferase RCN11 (533 aa).

The Cytoplasmic portion of the chain corresponds to 1–23; that stretch reads MMPVRTYHHHHHHNNSNNHRLRR. Residues 24–44 traverse the membrane as a helical; Signal-anchor for type II membrane protein segment; the sequence is IIPRVLLAVFAIYAVSFAAYL. The Lumenal portion of the chain corresponds to 45 to 533; sequence LRHQSPHPHP…LSNILKGFGC (489 aa). Residues 51–78 are disordered; sequence HPHPHPAADPERDAVDAAGGGGGGGAVD. Residues 56–65 show a composition bias toward basic and acidic residues; it reads PAADPERDAV. Residues asparagine 307 and asparagine 313 are each glycosylated (N-linked (GlcNAc...) asparagine).

It belongs to the glycosyltransferase 61 family. Expressed at the base of the crown roots and in the basal region of the shoot, which contains the shoot and axillary meristems.

The protein resides in the golgi apparatus membrane. Its pathway is glycan metabolism. In terms of biological role, glycosyltransferase involved in the xylosylation of N-glycans. Possesses beta-1,2-xylosyltransferase activity, transferring xylose from UDP-xylose to the core beta-linked mannose of N-glycans. Beta-1,2-linked xylose residues on N-glycans are critical for seed germination and plant development and growth under conditions of abiotic stress. This chain is Beta-1,2-xylosyltransferase RCN11, found in Oryza sativa subsp. japonica (Rice).